Consider the following 703-residue polypeptide: WD repeat-containing protein pop2 (703 aa).

Composition is skewed to polar residues over residues 1 to 27 (MSLS…SSSP), 63 to 73 (ESNSCNGNTSS), and 156 to 178 (SISS…TVSP). Disordered regions lie at residues 1 to 73 (MSLS…NTSS) and 156 to 180 (SISS…SPGS). Residues 1-170 (MSLSRCPTDN…SDNFPPSPKV (170 aa)) form an interaction with pop1 region. Positions 236–283 (KDILSNLPFSIVQSILLNLDIHSFLSCRLVSPTWNRILDVHTSYWKHM) constitute an F-box domain. 6 WD repeats span residues 389-417 (GHKE…RVWN), 429-473 (GHIS…RVWK), 505-533 (GHTD…RIWR), 545-575 (GHSL…RVWD), 587-615 (GHDA…RIWD), and 625-654 (LPSN…KLWD).

Homodimer and heterodimer with pop1. Binds to cul1, pip1 and phosphorylated cdc18.

The protein localises to the cytoplasm. Its subcellular location is the nucleus. Its function is as follows. Involved in maintenance of ploidy through proteasome dependent degradation of CDK inhibitor rum1 and S-phase initiator cdc18. Functions as a recognition factor for rum1 and cdc18, which are subsequently ubiquitinated and targeted to the 26S proteasome for degradation. Together with pop1, required for cig2 instability during G2 and M phase and cig2 degradation in exponentially growing cells. This chain is WD repeat-containing protein pop2 (pop2), found in Schizosaccharomyces pombe (strain 972 / ATCC 24843) (Fission yeast).